The following is a 275-amino-acid chain: 3-methyl-2-oxobutanoate hydroxymethyltransferase (275 aa).

2 residues coordinate Mg(2+): Asp55 and Asp94. 3-methyl-2-oxobutanoate-binding positions include 55–56 (DS), Asp94, and Lys123. Glu125 provides a ligand contact to Mg(2+). Glu192 serves as the catalytic Proton acceptor.

It belongs to the PanB family. As to quaternary structure, homodecamer; pentamer of dimers. Requires Mg(2+) as cofactor.

Its subcellular location is the cytoplasm. It catalyses the reaction 3-methyl-2-oxobutanoate + (6R)-5,10-methylene-5,6,7,8-tetrahydrofolate + H2O = 2-dehydropantoate + (6S)-5,6,7,8-tetrahydrofolate. The protein operates within cofactor biosynthesis; (R)-pantothenate biosynthesis; (R)-pantoate from 3-methyl-2-oxobutanoate: step 1/2. Functionally, catalyzes the reversible reaction in which hydroxymethyl group from 5,10-methylenetetrahydrofolate is transferred onto alpha-ketoisovalerate to form ketopantoate. The sequence is that of 3-methyl-2-oxobutanoate hydroxymethyltransferase from Halorhodospira halophila (strain DSM 244 / SL1) (Ectothiorhodospira halophila (strain DSM 244 / SL1)).